The chain runs to 476 residues: Protein transport protein Sec61 subunit alpha isoform 1 (476 aa).

Over A2 to F28 the chain is Cytoplasmic. Residues K29–C46 traverse the membrane as a helical segment. Topologically, residues Q47 to G80 are lumenal. The chain crosses the membrane as a helical span at residues I81 to A97. The Cytoplasmic portion of the chain corresponds to K98 to R109. A helical transmembrane segment spans residues A110–Y131. Residues V132 to C148 lie on the Lumenal side of the membrane. The helical transmembrane segment at L149–E167 threads the bilayer. Residues L168 to S177 lie on the Cytoplasmic side of the membrane. Residues G178–F196 traverse the membrane as a helical segment. Over S197 to N241 the chain is Lumenal. Residues L242 to Q259 traverse the membrane as a helical segment. Residues G260–Y285 are Cytoplasmic-facing. Residues T286–Q306 traverse the membrane as a helical segment. The Lumenal segment spans residues M307 to E356. Residues D357 to W379 traverse the membrane as a helical segment. Residues I380–A420 lie on the Cytoplasmic side of the membrane. Residues A421–F437 form a helical membrane-spanning segment. Residues L438 to S443 are Lumenal-facing. A helical transmembrane segment spans residues G444 to F458. Over E459 to F476 the chain is Cytoplasmic.

This sequence belongs to the SecY/SEC61-alpha family. The SEC61 channel-forming translocon complex consists of channel-forming core components SEC61A1, SEC61B and SEC61G and different auxiliary components such as SEC62 and SEC63. The SEC61 channel associates with the multi-pass translocon (MPT) complex.

The protein localises to the endoplasmic reticulum membrane. Component of SEC61 channel-forming translocon complex that mediates transport of signal peptide-containing precursor polypeptides across the endoplasmic reticulum (ER). Forms a ribosome receptor and a gated pore in the ER membrane, both functions required for cotranslational translocation of nascent polypeptides. May cooperate with auxiliary protein SEC62, SEC63 and HSPA5/BiP to enable post-translational transport of small presecretory proteins. The SEC61 channel is also involved in ER membrane insertion of transmembrane proteins: it mediates membrane insertion of the first few transmembrane segments of proteins, while insertion of subsequent transmembrane regions of multi-pass membrane proteins is mediated by the multi-pass translocon (MPT) complex. The SEC61 channel cooperates with the translocating protein TRAM1 to import nascent proteins into the ER. Controls the passive efflux of calcium ions from the ER lumen to the cytosol through SEC61 channel, contributing to the maintenance of cellular calcium homeostasis. Plays a critical role in nephrogenesis, specifically at pronephros stage. The polypeptide is Protein transport protein Sec61 subunit alpha isoform 1 (SEC61A1) (Canis lupus familiaris (Dog)).